We begin with the raw amino-acid sequence, 239 residues long: DNA oxidative demethylase ALKBH2 (239 aa).

A PCNA-binding motif is present at residues 3–7 (KFLVR). Residues 11-32 (RDLQGGGEEPAPTGGASGDLKS) form a disordered region. Substrate-binding positions include 80-82 (FGK) and 100-102 (YTF). The region spanning 130-235 (TFNFVLVNRY…RVNLTFRKIL (106 aa)) is the Fe2OG dioxygenase domain. Residues asparagine 137, tyrosine 139, and histidine 149 each contribute to the 2-oxoglutarate site. Residues histidine 149 and aspartate 151 each contribute to the Fe cation site. Aspartate 152 contacts substrate. The 2-oxoglutarate site is built by histidine 214, arginine 226, threonine 230, and arginine 232. Histidine 214 lines the Fe cation pocket.

The protein belongs to the alkB family. Interacts with PCNA homotrimer; this interaction is enhanced during the S-phase of the cell cycle. Interacts with nucleolar proteins NCL, UBTF and NPM1. Interacts with XRCC5-XRCC6 heterodimer. Fe(2+) serves as cofactor. As to expression, detected in liver, testis and kidney (at protein level). Detected in heart and testis.

It localises to the nucleus. The protein localises to the nucleolus. Its subcellular location is the nucleoplasm. The catalysed reaction is a methylated nucleobase within DNA + 2-oxoglutarate + O2 = a nucleobase within DNA + formaldehyde + succinate + CO2. It catalyses the reaction an N(1)-methyl-2'-deoxyadenosine in double-stranded DNA + 2-oxoglutarate + O2 = a 2'-deoxyadenosine in double-stranded DNA + formaldehyde + succinate + CO2 + H(+). The enzyme catalyses an N(1)-methyl-2'-deoxyadenosine in single-stranded DNA + 2-oxoglutarate + O2 = a 2'-deoxyadenosine in single-stranded DNA + formaldehyde + succinate + CO2 + H(+). It carries out the reaction an N(3)-methyl-2'-deoxycytidine in double-stranded DNA + 2-oxoglutarate + O2 = a 2'-deoxycytidine in double-stranded DNA + formaldehyde + succinate + CO2 + H(+). The catalysed reaction is an N(3)-methyl-2'-deoxycytidine in single-stranded DNA + 2-oxoglutarate + O2 = a 2'-deoxycytidine in single-stranded DNA + formaldehyde + succinate + CO2 + H(+). It catalyses the reaction a 1,N(6)-etheno-2'-deoxyadenosine in double-stranded DNA + 2-oxoglutarate + O2 + H2O = a 2'-deoxyadenosine in double-stranded DNA + glyoxal + succinate + CO2. The enzyme catalyses a 1,N(6)-etheno-2'-deoxyadenosine in single-stranded DNA + 2-oxoglutarate + O2 + H2O = a 2'-deoxyadenosine in single-stranded DNA + glyoxal + succinate + CO2. It carries out the reaction a 3,N(4)-etheno-2'-deoxycytidine in double-stranded DNA + 2-oxoglutarate + O2 + H2O = a 2'-deoxycytidine in double-stranded DNA + glyoxal + succinate + CO2. The catalysed reaction is a 3,N(4)-etheno-2'-deoxycytidine in single-stranded DNA + 2-oxoglutarate + O2 + H2O = a 2'-deoxycytidine in single-stranded DNA + glyoxal + succinate + CO2. It catalyses the reaction a 1,N(2)-etheno-2'-deoxyguanosine in double-stranded DNA + 2-oxoglutarate + O2 + H2O = a 2'-deoxyguanosine in double-stranded DNA + glyoxal + succinate + CO2. Activated by magnesium ions. In terms of biological role, dioxygenase that repairs alkylated nucleic acid bases by direct reversal oxidative dealkylation. Can process both double-stranded (ds) and single-stranded (ss) DNA substrates, with a strong preference for dsDNA. Uses molecular oxygen, 2-oxoglutarate and iron as cofactors to oxidize the alkyl groups that are subsequently released as aldehydes, regenerating the undamaged bases. Probes the base pair stability, locates a weakened base pair and flips the damaged base to accommodate the lesion in its active site for efficient catalysis. Repairs monoalkylated bases, specifically N1-methyladenine and N3-methylcytosine, as well as higher order alkyl adducts such as bases modified with exocyclic bridged adducts known as etheno adducts including 1,N6-ethenoadenine, 3,N4-ethenocytosine and 1,N2-ethenoguanine. Acts as a gatekeeper of genomic integrity under alkylation stress. Efficiently repairs alkylated lesions in ribosomal DNA (rDNA). These lesions can cause ss- and dsDNA strand breaks that severely impair rDNA transcription. In a response mechanism to DNA damage, associates with PCNA at replication forks to repair alkylated adducts prior to replication. In Mus musculus (Mouse), this protein is DNA oxidative demethylase ALKBH2 (Alkbh2).